Reading from the N-terminus, the 182-residue chain is Plasmolipin (182 aa).

The tract at residues 1-20 is disordered; the sequence is MAEFPSKVNTRTSSPAQGGG. The Cytoplasmic segment spans residues 1-35; sequence MAEFPSKVNTRTSSPAQGGGAVVSTLSPDLGFVRS. Residues 7–16 are compositionally biased toward polar residues; that stretch reads KVNTRTSSPA. In terms of domain architecture, MARVEL spans 32–166; the sequence is FVRSSLGALM…SAFLSFQAWR (135 aa). The chain crosses the membrane as a helical span at residues 36 to 56; sequence SLGALMLLQLVLGLLVWALIA. Over 57-68 the chain is Extracellular; that stretch reads DTPYHLYPSYGW. Residues 69–89 traverse the membrane as a helical segment; the sequence is VMFVAVFLWLVTIIFFVLYLF. Residues 90–99 are Cytoplasmic-facing; the sequence is QLHMKLYMVP. Residues 100 to 120 form a helical membrane-spanning segment; that stretch reads WPLVLMVFNVGATVLYITAFI. The Extracellular segment spans residues 121-141; sequence TCSASVELTSLKGSQPYNQRA. Residues 142 to 162 form a helical membrane-spanning segment; that stretch reads AASFFSCLVMIAYGVSAFLSF. The Cytoplasmic portion of the chain corresponds to 163–182; it reads QAWRGVGSNAATSQMAGGYA.

The protein belongs to the MAL family. In terms of assembly, forms oligomers. In terms of processing, phosphorylated.

It localises to the cell membrane. Its subcellular location is the myelin membrane. The protein resides in the apical cell membrane. Main component of the myelin sheath that plays an important role in myelin membrane biogenesis and myelination. Plays an essential function in apical endocytosis. Regulates epithelial development through the regulation of apical endocytosis. Part of the intracellular machinery that mediates basolateral-to-apical transport of ICAM-1, an essential adhesion receptor in epithelial cells, from the subapical compartment in hepatic epithelial cells. The chain is Plasmolipin (PLLP) from Bos taurus (Bovine).